The chain runs to 350 residues: Protein CONSERVED ONLY IN THE GREEN LINEAGE 160, chloroplastic (350 aa).

The transit peptide at 1–46 (MAILSYISATSTTPPIPQDQSPNSRLPTKIILPNKKPEKWSTGVAP) directs the protein to the chloroplast. Residues 7 to 26 (ISATSTTPPIPQDQSPNSRL) are compositionally biased toward polar residues. Residues 7–58 (ISATSTTPPIPQDQSPNSRLPTKIILPNKKPEKWSTGVAPGEYGGPPTTTKL) are disordered. Position 117 is a phosphoserine (serine 117). 4 helical membrane-spanning segments follow: residues 213–233 (KNKI…SAYI), 239–259 (IALS…MLGN), 276–296 (ANQP…RWNA), and 304–324 (FMHL…IATF).

It localises to the plastid. The protein localises to the chloroplast thylakoid membrane. Its function is as follows. Facilitates the assembly of the membrane proton channel of the chloroplastic F-type ATPase. Specifically required for the efficient assembly and integration of the CF(0) subunit c into the chloroplastic ATPase complex in the thylakoid membrane. This chain is Protein CONSERVED ONLY IN THE GREEN LINEAGE 160, chloroplastic, found in Arabidopsis thaliana (Mouse-ear cress).